Here is a 371-residue protein sequence, read N- to C-terminus: Cytochrome b (371 aa).

4 helical membrane passes run 25–45 (FGSMLLTCLILQITTGFFLAI), 69–90 (WIMQNLHAIGASMFFICIYIHI), 105–125 (WLSGTTLLITLMATAFFGYVL), and 170–190 (FFALHFILPFAIISLSSIHII). 2 residues coordinate heme b: H75 and H89. Positions 174 and 188 each coordinate heme b. H193 lines the a ubiquinone pocket. 4 consecutive transmembrane segments (helical) span residues 218–238 (YKDTLMTISLFILMFTILSFS), 280–300 (LGGTLALLMSVTILMTAPFTH), 312–332 (LAQMAFWTLIATFITITWTAS), and 339–358 (FIIISQMTSILYFLFFIMNP).

It belongs to the cytochrome b family. As to quaternary structure, the cytochrome bc1 complex contains 3 respiratory subunits (MT-CYB, CYC1 and UQCRFS1), 2 core proteins (UQCRC1 and UQCRC2) and probably 6 low-molecular weight proteins. Heme b serves as cofactor.

It is found in the mitochondrion inner membrane. Its function is as follows. Component of the ubiquinol-cytochrome c reductase complex (complex III or cytochrome b-c1 complex) that is part of the mitochondrial respiratory chain. The b-c1 complex mediates electron transfer from ubiquinol to cytochrome c. Contributes to the generation of a proton gradient across the mitochondrial membrane that is then used for ATP synthesis. This is Cytochrome b (MT-CYB) from Sinomicrurus kelloggi (Kellogg's coral snake).